The primary structure comprises 452 residues: Exodeoxyribonuclease 7 large subunit (452 aa).

It belongs to the XseA family. As to quaternary structure, heterooligomer composed of large and small subunits.

The protein resides in the cytoplasm. The catalysed reaction is Exonucleolytic cleavage in either 5'- to 3'- or 3'- to 5'-direction to yield nucleoside 5'-phosphates.. Its function is as follows. Bidirectionally degrades single-stranded DNA into large acid-insoluble oligonucleotides, which are then degraded further into small acid-soluble oligonucleotides. This chain is Exodeoxyribonuclease 7 large subunit, found in Bacillus anthracis (strain A0248).